We begin with the raw amino-acid sequence, 119 residues long: Ethylene-responsive proteinase inhibitor 1 (119 aa).

Positions 1–27 (MEANKSMVKLVAFLIILVSSCFQSLTA) are cleaved as a signal peptide. Residues 28-48 (QDLEIEVSDGLNVLQVHDVSQ) constitute a propeptide that is removed on maturation.

The protein belongs to the protease inhibitor I13 (potato type I serine protease inhibitor) family.

The protein resides in the secreted. In Solanum lycopersicum (Tomato), this protein is Ethylene-responsive proteinase inhibitor 1.